A 78-amino-acid polypeptide reads, in one-letter code: Translational regulator CsrA (78 aa).

This sequence belongs to the CsrA/RsmA family. In terms of assembly, homodimer; the beta-strands of each monomer intercalate to form a hydrophobic core, while the alpha-helices form wings that extend away from the core.

It localises to the cytoplasm. In terms of biological role, a translational regulator that binds mRNA to regulate translation initiation and/or mRNA stability. Usually binds in the 5'-UTR at or near the Shine-Dalgarno sequence preventing ribosome-binding, thus repressing translation. Its main target seems to be the major flagellin gene, while its function is anatagonized by FliW. This Desulfotalea psychrophila (strain LSv54 / DSM 12343) protein is Translational regulator CsrA.